The chain runs to 125 residues: Small ribosomal subunit protein uS12 (125 aa).

The interval 1 to 24 (MPTISQLVRKPRKAKRTKSKVPAL) is disordered. Positions 9-19 (RKPRKAKRTKS) are enriched in basic residues. D89 is subject to 3-methylthioaspartic acid. The interval 101-125 (SLDTAGVKDRKQARSKYGSKRPKSA) is disordered. A compositionally biased stretch (basic residues) spans 113-125 (ARSKYGSKRPKSA).

This sequence belongs to the universal ribosomal protein uS12 family. In terms of assembly, part of the 30S ribosomal subunit. Contacts proteins S8 and S17. May interact with IF1 in the 30S initiation complex.

Its function is as follows. With S4 and S5 plays an important role in translational accuracy. Interacts with and stabilizes bases of the 16S rRNA that are involved in tRNA selection in the A site and with the mRNA backbone. Located at the interface of the 30S and 50S subunits, it traverses the body of the 30S subunit contacting proteins on the other side and probably holding the rRNA structure together. The combined cluster of proteins S8, S12 and S17 appears to hold together the shoulder and platform of the 30S subunit. This is Small ribosomal subunit protein uS12 from Nitrosomonas europaea (strain ATCC 19718 / CIP 103999 / KCTC 2705 / NBRC 14298).